A 183-amino-acid chain; its full sequence is NADH-ubiquinone oxidoreductase chain 5 (183 aa).

The next 4 membrane-spanning stretches (helical) occupy residues 7 to 27, 30 to 50, 111 to 131, and 144 to 164; these read FMCY…GDNS, LFLG…FWFT, AITL…AQIG, and TPVS…FMIA.

Belongs to the complex I subunit 5 family.

The protein localises to the mitochondrion inner membrane. The enzyme catalyses a ubiquinone + NADH + 5 H(+)(in) = a ubiquinol + NAD(+) + 4 H(+)(out). Functionally, core subunit of the mitochondrial membrane respiratory chain NADH dehydrogenase (Complex I) that is believed to belong to the minimal assembly required for catalysis. Complex I functions in the transfer of electrons from NADH to the respiratory chain. The immediate electron acceptor for the enzyme is believed to be ubiquinone. The protein is NADH-ubiquinone oxidoreductase chain 5 (NDH5) of Pisum sativum (Garden pea).